The following is an 86-amino-acid chain: Small ribosomal subunit protein bS16 (86 aa).

The protein belongs to the bacterial ribosomal protein bS16 family.

In Mycoplasmoides gallisepticum (strain R(low / passage 15 / clone 2)) (Mycoplasma gallisepticum), this protein is Small ribosomal subunit protein bS16.